The sequence spans 156 residues: Single-stranded DNA-binding protein 1 (156 aa).

Residues 1–104 (MLNRTILVGR…VVADSIQFLE (104 aa)) enclose the SSB domain. The tract at residues 122 to 146 (QTRGQSQYSNNKPVKDNPFANANCP) is disordered.

Homotetramer.

This chain is Single-stranded DNA-binding protein 1 (ssb1), found in Staphylococcus aureus (strain MSSA476).